The sequence spans 354 residues: Uroporphyrinogen decarboxylase (354 aa).

Residues 30–34 (RQAGR), Asp-79, Tyr-154, Ser-209, and His-333 each bind substrate.

It belongs to the uroporphyrinogen decarboxylase family. As to quaternary structure, homodimer.

It localises to the cytoplasm. It carries out the reaction uroporphyrinogen III + 4 H(+) = coproporphyrinogen III + 4 CO2. It functions in the pathway porphyrin-containing compound metabolism; protoporphyrin-IX biosynthesis; coproporphyrinogen-III from 5-aminolevulinate: step 4/4. In terms of biological role, catalyzes the decarboxylation of four acetate groups of uroporphyrinogen-III to yield coproporphyrinogen-III. This is Uroporphyrinogen decarboxylase from Mycolicibacterium vanbaalenii (strain DSM 7251 / JCM 13017 / BCRC 16820 / KCTC 9966 / NRRL B-24157 / PYR-1) (Mycobacterium vanbaalenii).